Here is a 423-residue protein sequence, read N- to C-terminus: Gamma-glutamyl phosphate reductase (423 aa).

The protein belongs to the gamma-glutamyl phosphate reductase family.

It is found in the cytoplasm. It carries out the reaction L-glutamate 5-semialdehyde + phosphate + NADP(+) = L-glutamyl 5-phosphate + NADPH + H(+). It participates in amino-acid biosynthesis; L-proline biosynthesis; L-glutamate 5-semialdehyde from L-glutamate: step 2/2. Functionally, catalyzes the NADPH-dependent reduction of L-glutamate 5-phosphate into L-glutamate 5-semialdehyde and phosphate. The product spontaneously undergoes cyclization to form 1-pyrroline-5-carboxylate. The polypeptide is Gamma-glutamyl phosphate reductase (Paraburkholderia xenovorans (strain LB400)).